The primary structure comprises 397 residues: CCA-adding enzyme (397 aa).

ATP contacts are provided by Gly-26 and Arg-29. The CTP site is built by Gly-26 and Arg-29. Mg(2+)-binding residues include Asp-39 and Asp-41. ATP is bound by residues Arg-110, Asp-153, Arg-156, Arg-159, and Arg-162. Arg-110, Asp-153, Arg-156, Arg-159, and Arg-162 together coordinate CTP.

This sequence belongs to the tRNA nucleotidyltransferase/poly(A) polymerase family. Bacterial CCA-adding enzyme type 3 subfamily. As to quaternary structure, homodimer. Mg(2+) is required as a cofactor.

It carries out the reaction a tRNA precursor + 2 CTP + ATP = a tRNA with a 3' CCA end + 3 diphosphate. The enzyme catalyses a tRNA with a 3' CCA end + 2 CTP + ATP = a tRNA with a 3' CCACCA end + 3 diphosphate. In terms of biological role, catalyzes the addition and repair of the essential 3'-terminal CCA sequence in tRNAs without using a nucleic acid template. Adds these three nucleotides in the order of C, C, and A to the tRNA nucleotide-73, using CTP and ATP as substrates and producing inorganic pyrophosphate. tRNA 3'-terminal CCA addition is required both for tRNA processing and repair. Also involved in tRNA surveillance by mediating tandem CCA addition to generate a CCACCA at the 3' terminus of unstable tRNAs. While stable tRNAs receive only 3'-terminal CCA, unstable tRNAs are marked with CCACCA and rapidly degraded. This is CCA-adding enzyme from Bacillus cereus (strain 03BB102).